Consider the following 321-residue polypeptide: tRNA dimethylallyltransferase (321 aa).

Position 24-31 (24-31 (GPTASGKS)) interacts with ATP. 26–31 (TASGKS) contacts substrate. Interaction with substrate tRNA regions lie at residues 49–52 (DSMQ) and 172–176 (QRIVR).

It belongs to the IPP transferase family. As to quaternary structure, monomer. Requires Mg(2+) as cofactor.

The catalysed reaction is adenosine(37) in tRNA + dimethylallyl diphosphate = N(6)-dimethylallyladenosine(37) in tRNA + diphosphate. Catalyzes the transfer of a dimethylallyl group onto the adenine at position 37 in tRNAs that read codons beginning with uridine, leading to the formation of N6-(dimethylallyl)adenosine (i(6)A). This is tRNA dimethylallyltransferase from Mesorhizobium japonicum (strain LMG 29417 / CECT 9101 / MAFF 303099) (Mesorhizobium loti (strain MAFF 303099)).